Here is an 84-residue protein sequence, read N- to C-terminus: Exodeoxyribonuclease 7 small subunit (84 aa).

This sequence belongs to the XseB family. In terms of assembly, heterooligomer composed of large and small subunits.

It is found in the cytoplasm. It catalyses the reaction Exonucleolytic cleavage in either 5'- to 3'- or 3'- to 5'-direction to yield nucleoside 5'-phosphates.. Functionally, bidirectionally degrades single-stranded DNA into large acid-insoluble oligonucleotides, which are then degraded further into small acid-soluble oligonucleotides. In Herminiimonas arsenicoxydans, this protein is Exodeoxyribonuclease 7 small subunit.